The sequence spans 274 residues: MGTLTVNQNKLQKRLRRLAGEAVADFNMIEDGDKVMVCLSGGKDSYTLLDVLLHLQKVAPIQFEIVAVNMDQKQPGFPEYVLPAYLKELGVEYHIVEKDTYSVVKELIPEGKTTCSLCSRLRRGTLYTFADEIGATKMALGHHRDDIVETFFLNMFFNGSLKAMPPKLRADDGRNVVIRPLAYCNEKDIQAYSDFKQFPIIPCNLCGSQENLQRQVVKEMLLDWERKTPGRTESIFRSLQNVIPSQLADRNLFDFASLKIDETAASRFVNVVNL.

The PP-loop motif signature appears at 40-45 (SGGKDS). The [4Fe-4S] cluster site is built by Cys115, Cys118, and Cys206.

This sequence belongs to the TtcA family. As to quaternary structure, homodimer. Requires Mg(2+) as cofactor. The cofactor is [4Fe-4S] cluster.

The protein localises to the cytoplasm. It carries out the reaction cytidine(32) in tRNA + S-sulfanyl-L-cysteinyl-[cysteine desulfurase] + AH2 + ATP = 2-thiocytidine(32) in tRNA + L-cysteinyl-[cysteine desulfurase] + A + AMP + diphosphate + H(+). It functions in the pathway tRNA modification. Catalyzes the ATP-dependent 2-thiolation of cytidine in position 32 of tRNA, to form 2-thiocytidine (s(2)C32). The sulfur atoms are provided by the cysteine/cysteine desulfurase (IscS) system. The polypeptide is tRNA-cytidine(32) 2-sulfurtransferase (Pseudomonas fluorescens (strain SBW25)).